The chain runs to 351 residues: Mediator of RNA polymerase II transcription subunit 4 (351 aa).

Positions 30–68 form a coiled coil; the sequence is QKLAEELLAAEAELSKSLKLLETHQNNNARLQQLRQETS. Disordered stretches follow at residues 156–217 and 256–351; these read TQTQ…PAHL and PRGY…DEDD. Residues 163-177 are compositionally biased toward polar residues; sequence NSFNLSFNGTVSTPI. Over residues 182–198 the composition is skewed to low complexity; the sequence is PTPTTTNDTQPSTQLPP. The segment covering 257 to 308 has biased composition (basic and acidic residues); sequence RGYDPAEQERRRVAEEKARREAEERARLEREEAERKGREERERMAREREAAR. Residues 262–311 are a coiled coil; that stretch reads AEQERRRVAEEKARREAEERARLEREEAERKGREERERMAREREAARLRN. Acidic residues predominate over residues 340-351; it reads ADDDEDDEDEDD.

It belongs to the Mediator complex subunit 4 family. As to quaternary structure, component of the Mediator complex.

The protein resides in the nucleus. Component of the Mediator complex, a coactivator involved in the regulated transcription of nearly all RNA polymerase II-dependent genes. Mediator functions as a bridge to convey information from gene-specific regulatory proteins to the basal RNA polymerase II transcription machinery. Mediator is recruited to promoters by direct interactions with regulatory proteins and serves as a scaffold for the assembly of a functional preinitiation complex with RNA polymerase II and the general transcription factors. This Chaetomium globosum (strain ATCC 6205 / CBS 148.51 / DSM 1962 / NBRC 6347 / NRRL 1970) (Soil fungus) protein is Mediator of RNA polymerase II transcription subunit 4 (MED4).